The chain runs to 603 residues: Probable methyltransferase PMT4 (603 aa).

At 1 to 12 (MKVASVIGLRPR) the chain is on the cytoplasmic side. The chain crosses the membrane as a helical; Signal-anchor for type II membrane protein span at residues 13–33 (ISGLLFLTLGVIALITILVPN). The Lumenal segment spans residues 34-603 (SDSSSTTSTT…LVCQKPLLKK (570 aa)). N-linked (GlcNAc...) asparagine glycosylation is found at Asn96 and Asn393.

This sequence belongs to the methyltransferase superfamily.

It is found in the endoplasmic reticulum membrane. This chain is Probable methyltransferase PMT4, found in Arabidopsis thaliana (Mouse-ear cress).